Consider the following 248-residue polypeptide: PF03932 family protein CutC (248 aa).

This sequence belongs to the CutC family. In terms of assembly, homodimer.

It is found in the cytoplasm. The polypeptide is PF03932 family protein CutC (Escherichia coli O7:K1 (strain IAI39 / ExPEC)).